The sequence spans 633 residues: Chaperone protein DnaK (633 aa).

Thr198 carries the phosphothreonine; by autocatalysis modification.

This sequence belongs to the heat shock protein 70 family.

In terms of biological role, acts as a chaperone. The chain is Chaperone protein DnaK from Rhodopseudomonas palustris (strain BisA53).